The following is a 590-amino-acid chain: Protein O-linked-mannose beta-1,4-N-acetylglucosaminyltransferase 2 (590 aa).

Topologically, residues 1-4 are cytoplasmic; that stretch reads MSVG. Residues 5-25 form a helical; Signal-anchor for type II membrane protein membrane-spanning segment; it reads TLLNGLLVSIVAALLWKYSKL. Residues 26–590 are Lumenal-facing; that stretch reads SEHAALLEEE…PFADVLMCRT (565 aa). N-linked (GlcNAc...) asparagine glycans are attached at residues N98, N275, and N553. A Fibronectin type-III domain is found at 494–590; the sequence is RVRDPQCQTS…PFADVLMCRT (97 aa).

Belongs to the glycosyltransferase 61 family.

The protein resides in the endoplasmic reticulum membrane. It catalyses the reaction 3-O-(alpha-D-mannosyl)-L-threonyl-[protein] + UDP-N-acetyl-alpha-D-glucosamine = 3-O-(N-acetyl-beta-D-glucosaminyl-(1-&gt;4)-alpha-D-mannosyl)-L-threonyl-[protein] + UDP + H(+). The protein operates within protein modification; protein glycosylation. O-linked mannose beta-1,4-N-acetylglucosaminyltransferase that transfers UDP-N-acetyl-D-glucosamine to the 4-position of the mannose to generate N-acetyl-D-glucosamine-beta-1,4-O-D-mannosylprotein. Involved in the biosynthesis of the phosphorylated O-mannosyl trisaccharide (N-acetylgalactosamine-beta-3-N-acetylglucosamine-beta-4-(phosphate-6-)mannose), a carbohydrate structure present in alpha-dystroglycan (DAG1), which is required for binding laminin G-like domain-containing extracellular proteins with high affinity. The sequence is that of Protein O-linked-mannose beta-1,4-N-acetylglucosaminyltransferase 2 (pomgnt2) from Takifugu rubripes (Japanese pufferfish).